A 611-amino-acid polypeptide reads, in one-letter code: Chaperone protein DnaK (611 aa).

Position 173 is a phosphothreonine; by autocatalysis (Thr-173). The segment covering 577 to 592 (QAAAGQAEGAEGAQDA) has biased composition (low complexity). The interval 577 to 598 (QAAAGQAEGAEGAQDAGAKKDN) is disordered.

Belongs to the heat shock protein 70 family.

Functionally, acts as a chaperone. This Bacillus anthracis (strain A0248) protein is Chaperone protein DnaK.